A 266-amino-acid polypeptide reads, in one-letter code: Proline-rich protein 23A (266 aa).

Over residues methionine 1–glutamine 18 the composition is skewed to low complexity. Disordered regions lie at residues methionine 1–aspartate 47 and glutamate 197–glutamate 266. Residues proline 227 to proline 238 are compositionally biased toward pro residues. Positions proline 255–glutamate 266 are enriched in basic residues.

It belongs to the PRR23 family.

This Homo sapiens (Human) protein is Proline-rich protein 23A (PRR23A).